A 290-amino-acid chain; its full sequence is 33 kDa chaperonin (290 aa).

Cystine bridges form between C235/C237 and C268/C271.

The protein belongs to the HSP33 family. Post-translationally, under oxidizing conditions two disulfide bonds are formed involving the reactive cysteines. Under reducing conditions zinc is bound to the reactive cysteines and the protein is inactive.

It is found in the cytoplasm. In terms of biological role, redox regulated molecular chaperone. Protects both thermally unfolding and oxidatively damaged proteins from irreversible aggregation. Plays an important role in the bacterial defense system toward oxidative stress. The chain is 33 kDa chaperonin from Streptococcus pyogenes serotype M12 (strain MGAS2096).